The primary structure comprises 280 residues: Dehydrogenase/reductase SDR family member 2, mitochondrial (280 aa).

The N-terminal 23 residues, 1-23 (MLSAVARGYQGWFHPCARLSVRM), are a transit peptide targeting the mitochondrion. NAD(+) contacts are provided by Ser-46 and Ile-48. Lys-96 is modified (N6-acetyllysine; alternate). Lys-96 is modified (N6-succinyllysine; alternate). Substrate is bound at residue Ser-172. 2 residues coordinate NAD(+): Tyr-185 and Lys-189. The active-site Proton acceptor is Tyr-185. Residue Lys-219 is modified to N6-acetyllysine; alternate. Residue Lys-219 is modified to N6-succinyllysine; alternate. Thr-220 is a binding site for NAD(+). Ser-223 carries the post-translational modification Phosphoserine. N6-succinyllysine is present on Lys-237.

It belongs to the short-chain dehydrogenases/reductases (SDR) family. As to quaternary structure, directly interacts with MDM2; this interaction occurs in the nucleus and does not target DHRS2 to degradation. As to expression, widely expressed, with highest levels in liver and kidney, followed by heart, spleen, skeletal muscle and placenta. In hemopoietic cells, expressed in dendritic cells, but not in monocytes, macrophages, granulocytes, nor in B and T lymphocytes.

Its subcellular location is the mitochondrion matrix. The protein resides in the nucleus. In terms of biological role, NADPH-dependent oxidoreductase which catalyzes the reduction of dicarbonyl compounds. Displays reductase activity in vitro with 3,4-hexanedione, 2,3-heptanedione and 1-phenyl-1,2-propanedione as substrates. May function as a dicarbonyl reductase in the enzymatic inactivation of reactive carbonyls involved in covalent modification of cellular components. Also displays a minor hydroxysteroid dehydrogenase activity toward bile acids such as ursodeoxycholic acid (UDCA) and isoursodeoxycholic acid (isoUDCA), which makes it unlikely to control hormone levels. Doesn't show any activity in vitro with retinoids and sugars as substrates. Attenuates MDM2-mediated p53/TP53 degradation, leading to p53/TP53 stabilization and increased transcription activity, resulting in the accumulation of MDM2 and CDKN1A/p21. Reduces proliferation, migration and invasion of cancer cells and well as the production of ROS in cancer. The sequence is that of Dehydrogenase/reductase SDR family member 2, mitochondrial from Homo sapiens (Human).